The sequence spans 220 residues: Fructose-6-phosphate aldolase 1 (220 aa).

Residue Lys85 is the Schiff-base intermediate with substrate of the active site.

It belongs to the transaldolase family. Type 3A subfamily. Homodecamer.

The protein localises to the cytoplasm. The catalysed reaction is beta-D-fructose 6-phosphate = dihydroxyacetone + D-glyceraldehyde 3-phosphate. Functionally, catalyzes the reversible formation of fructose 6-phosphate from dihydroxyacetone and D-glyceraldehyde 3-phosphate via an aldolization reaction. The chain is Fructose-6-phosphate aldolase 1 (fsaA) from Escherichia coli O6:H1 (strain CFT073 / ATCC 700928 / UPEC).